The primary structure comprises 644 residues: DNA mismatch repair protein MutL (644 aa).

2 disordered regions span residues 338-390 (RPNA…ERPA) and 416-445 (QPQE…DDTQ). Composition is skewed to low complexity over residues 349–366 (EATP…EASA) and 416–427 (QPQEAAEEAAGT).

It belongs to the DNA mismatch repair MutL/HexB family.

In terms of biological role, this protein is involved in the repair of mismatches in DNA. It is required for dam-dependent methyl-directed DNA mismatch repair. May act as a 'molecular matchmaker', a protein that promotes the formation of a stable complex between two or more DNA-binding proteins in an ATP-dependent manner without itself being part of a final effector complex. The chain is DNA mismatch repair protein MutL from Chromohalobacter salexigens (strain ATCC BAA-138 / DSM 3043 / CIP 106854 / NCIMB 13768 / 1H11).